The following is a 341-amino-acid chain: S-adenosylmethionine:tRNA ribosyltransferase-isomerase (341 aa).

It belongs to the QueA family. In terms of assembly, monomer.

It localises to the cytoplasm. The enzyme catalyses 7-aminomethyl-7-carbaguanosine(34) in tRNA + S-adenosyl-L-methionine = epoxyqueuosine(34) in tRNA + adenine + L-methionine + 2 H(+). It functions in the pathway tRNA modification; tRNA-queuosine biosynthesis. In terms of biological role, transfers and isomerizes the ribose moiety from AdoMet to the 7-aminomethyl group of 7-deazaguanine (preQ1-tRNA) to give epoxyqueuosine (oQ-tRNA). The protein is S-adenosylmethionine:tRNA ribosyltransferase-isomerase of Symbiobacterium thermophilum (strain DSM 24528 / JCM 14929 / IAM 14863 / T).